Here is a 124-residue protein sequence, read N- to C-terminus: Putative iron-sulfur cluster insertion protein ErpA (124 aa).

Iron-sulfur cluster contacts are provided by Cys-52, Cys-116, and Cys-118.

It belongs to the HesB/IscA family. In terms of assembly, homodimer. Requires iron-sulfur cluster as cofactor.

Its function is as follows. Required for insertion of 4Fe-4S clusters. The sequence is that of Putative iron-sulfur cluster insertion protein ErpA from Ralstonia nicotianae (strain ATCC BAA-1114 / GMI1000) (Ralstonia solanacearum).